Here is a 214-residue protein sequence, read N- to C-terminus: Phosphatidyl-N-methylethanolamine N-methyltransferase (214 aa).

At 1 to 19 (MPLVALGVADLFNFVDYSK) the chain is on the lumenal side. Positions 20-40 (TSLAISAAAIAFNPTFWNIVA) form an intramembrane region, helical. The Lumenal portion of the chain corresponds to 41–52 (RREYRTKFLTRA). A helical membrane pass occupies residues 53-74 (FGGNAQVACYFLAVTIFGLGLV). The Cytoplasmic segment spans residues 75–101 (RDFLYERALRDQPSHPLLEGTYVKYAA). A helical transmembrane segment spans residues 102-122 (YALLALGNLLVITSTMRLGIT). Position 106-108 (106-108 (ALG)) interacts with S-adenosyl-L-methionine. At 123–165 (GTFLGDYFGILMDGIVTGFPFNVTSAPMYYGSTMSFLGTALLY) the chain is on the lumenal side. Residues 166 to 186 (GKPAGLLLTAWVLFVYIIAIQ) traverse the membrane as a helical segment. At 187 to 214 (FENPFTAEIYAKRDRERAKAAGTSKKEL) the chain is on the cytoplasmic side. 188–189 (EN) is a binding site for S-adenosyl-L-methionine.

It belongs to the class VI-like SAM-binding methyltransferase superfamily. PEMT/PEM2 methyltransferase family.

It localises to the endoplasmic reticulum membrane. Its subcellular location is the mitochondrion membrane. The enzyme catalyses a 1,2-diacyl-sn-glycero-3-phospho-N-methylethanolamine + S-adenosyl-L-methionine = a 1,2-diacyl-sn-glycero-3-phospho-N,N-dimethylethanolamine + S-adenosyl-L-homocysteine + H(+). It catalyses the reaction a 1,2-diacyl-sn-glycero-3-phospho-N,N-dimethylethanolamine + S-adenosyl-L-methionine = a 1,2-diacyl-sn-glycero-3-phosphocholine + S-adenosyl-L-homocysteine + H(+). The protein operates within phospholipid metabolism; phosphatidylcholine biosynthesis. Catalyzes the second two steps of the methylation pathway of phosphatidylcholine biosynthesis, the SAM-dependent methylation of phosphatidylmonomethylethanolamine (PMME) to phosphatidyldimethylethanolamine (PDME) and of PDME to phosphatidylcholine (PC). This chain is Phosphatidyl-N-methylethanolamine N-methyltransferase, found in Neurospora crassa (strain ATCC 24698 / 74-OR23-1A / CBS 708.71 / DSM 1257 / FGSC 987).